A 454-amino-acid polypeptide reads, in one-letter code: Argininosuccinate lyase (454 aa).

It belongs to the lyase 1 family. Argininosuccinate lyase subfamily.

The protein resides in the cytoplasm. It carries out the reaction 2-(N(omega)-L-arginino)succinate = fumarate + L-arginine. It functions in the pathway amino-acid biosynthesis; L-arginine biosynthesis; L-arginine from L-ornithine and carbamoyl phosphate: step 3/3. The sequence is that of Argininosuccinate lyase from Herpetosiphon aurantiacus (strain ATCC 23779 / DSM 785 / 114-95).